A 339-amino-acid polypeptide reads, in one-letter code: Anthranilate phosphoribosyltransferase (339 aa).

Residues G81, 84–85 (GD), T89, 91–94 (NIST), 109–117 (KHGNRNLSS), and T121 each bind 5-phospho-alpha-D-ribose 1-diphosphate. G81 provides a ligand contact to anthranilate. Mg(2+) is bound at residue S93. An anthranilate-binding site is contributed by N112. R167 provides a ligand contact to anthranilate. Positions 226 and 227 each coordinate Mg(2+).

This sequence belongs to the anthranilate phosphoribosyltransferase family. As to quaternary structure, homodimer. Requires Mg(2+) as cofactor.

The catalysed reaction is N-(5-phospho-beta-D-ribosyl)anthranilate + diphosphate = 5-phospho-alpha-D-ribose 1-diphosphate + anthranilate. Its pathway is amino-acid biosynthesis; L-tryptophan biosynthesis; L-tryptophan from chorismate: step 2/5. In terms of biological role, catalyzes the transfer of the phosphoribosyl group of 5-phosphorylribose-1-pyrophosphate (PRPP) to anthranilate to yield N-(5'-phosphoribosyl)-anthranilate (PRA). This is Anthranilate phosphoribosyltransferase from Ruegeria pomeroyi (strain ATCC 700808 / DSM 15171 / DSS-3) (Silicibacter pomeroyi).